A 453-amino-acid polypeptide reads, in one-letter code: Probable glycine dehydrogenase (decarboxylating) subunit 1 (453 aa).

Belongs to the GcvP family. N-terminal subunit subfamily. As to quaternary structure, the glycine cleavage system is composed of four proteins: P, T, L and H. In this organism, the P 'protein' is a heterodimer of two subunits.

It carries out the reaction N(6)-[(R)-lipoyl]-L-lysyl-[glycine-cleavage complex H protein] + glycine + H(+) = N(6)-[(R)-S(8)-aminomethyldihydrolipoyl]-L-lysyl-[glycine-cleavage complex H protein] + CO2. The glycine cleavage system catalyzes the degradation of glycine. The P protein binds the alpha-amino group of glycine through its pyridoxal phosphate cofactor; CO(2) is released and the remaining methylamine moiety is then transferred to the lipoamide cofactor of the H protein. The protein is Probable glycine dehydrogenase (decarboxylating) subunit 1 of Erythrobacter litoralis (strain HTCC2594).